Here is a 463-residue protein sequence, read N- to C-terminus: Lariat debranching enzyme (463 aa).

The a divalent metal cation site is built by Cys8, His10, Asp33, and Asn78. Residues 118–148 (SGIYSAMDYKKGRYEGLPYNYKMLKSIYHTR) are lariat recognition loop. His168, His220, and His222 together coordinate a divalent metal cation. Residues 250-324 (SGFSMKGLNE…QVTKFLALDK (75 aa)) form a disordered region. Polar residues predominate over residues 256–267 (GLNEPSQERLPV). Composition is skewed to basic and acidic residues over residues 276-289 (DEEG…EKQD) and 299-323 (CRKE…LALD).

It belongs to the lariat debranching enzyme family. Fe(2+) serves as cofactor. Requires Zn(2+) as cofactor. It depends on Mn(2+) as a cofactor.

The protein resides in the nucleus. It localises to the cytoplasm. With respect to regulation, active in presence of diverse metals including Fe(2+), Zn(2+) and Mn(2+). Binds two metal cations in two adjacent alpha and beta metal-binding pockets. Its function is as follows. Cleaves the 2'-5' phosphodiester linkage at the branch point of lariat intron pre-mRNAs after splicing and converts them into linear molecules that are subsequently degraded, thereby facilitating ribonucleotide turnover. The polypeptide is Lariat debranching enzyme (dbr1) (Schizosaccharomyces pombe (strain 972 / ATCC 24843) (Fission yeast)).